Consider the following 510-residue polypeptide: ATP synthase subunit alpha 1 (510 aa).

169–176 (GDRQTGKT) contributes to the ATP binding site.

Belongs to the ATPase alpha/beta chains family. F-type ATPases have 2 components, CF(1) - the catalytic core - and CF(0) - the membrane proton channel. CF(1) has five subunits: alpha(3), beta(3), gamma(1), delta(1), epsilon(1). CF(0) has three main subunits: a(1), b(2) and c(9-12). The alpha and beta chains form an alternating ring which encloses part of the gamma chain. CF(1) is attached to CF(0) by a central stalk formed by the gamma and epsilon chains, while a peripheral stalk is formed by the delta and b chains.

It localises to the cell inner membrane. The enzyme catalyses ATP + H2O + 4 H(+)(in) = ADP + phosphate + 5 H(+)(out). Produces ATP from ADP in the presence of a proton gradient across the membrane. The alpha chain is a regulatory subunit. This is ATP synthase subunit alpha 1 from Marinomonas sp. (strain MWYL1).